The following is a 1067-amino-acid chain: Receptor-type guanylate cyclase gcy-10 (1067 aa).

The first 20 residues, 1 to 20 (MLKSLLIIVIVFLHRELCDG), serve as a signal peptide directing secretion. At 21–438 (IQLILFDNWP…CVAKSSCVNY (418 aa)) the chain is on the extracellular side. An N-linked (GlcNAc...) asparagine glycan is attached at N411. The helical transmembrane segment at 439–459 (IPHIIAAVVIVTIIVIAIVII) threads the bilayer. At 460–1067 (VKQRRHKLNI…RGSIVPLQKA (608 aa)) the chain is on the cytoplasmic side. The region spanning 509-791 (ALTSRRRVFG…ESISTVYPLS (283 aa)) is the Protein kinase domain. Residues 515–523 (RVFGSYALV) and K534 contribute to the ATP site. Residues 859-989 (TVMFVQICDF…DTVNFASRMQ (131 aa)) form the Guanylate cyclase domain.

Belongs to the adenylyl cyclase class-4/guanylyl cyclase family. In terms of tissue distribution, expressed predominantly in AWC but also in AWB, ASI, ASJ and ASK sensory neurons and in I1 interneuron.

It localises to the cell membrane. It is found in the cell projection. Its subcellular location is the cilium. The catalysed reaction is GTP = 3',5'-cyclic GMP + diphosphate. In terms of biological role, guanylate cyclase involved in the production of the second messenger cGMP. Regulates chemotaxis responses toward volatile odorants in AWC sensory neurons and their avoidance in AWB sensory neurons. May be involved in sensitivity to quinine by regulating egl-4 activity through the production of cGMP. Involved in phototransduction in ASJ neurons downstream of G protein coupled-photoreceptor lite-1. Required to maintain the expression of putative olfactory receptor str-2 in AWC neurons in adults. In AWB and AWC sensory neurons, mediates the recognition of food oders which subsequently allows for the detection of preferred food sources. Involved in AWB sensory neuron development and extension during postembryonic development, potentially via mediating localization of tub-1 and PI(4,5)P2 to membrane cilia. The polypeptide is Receptor-type guanylate cyclase gcy-10 (Caenorhabditis elegans).